Reading from the N-terminus, the 278-residue chain is Probable endonuclease 4 (278 aa).

Zn(2+) is bound by residues H69, H109, E145, D179, H182, H216, D229, H231, and E261.

It belongs to the AP endonuclease 2 family. Requires Zn(2+) as cofactor.

It carries out the reaction Endonucleolytic cleavage to 5'-phosphooligonucleotide end-products.. Endonuclease IV plays a role in DNA repair. It cleaves phosphodiester bonds at apurinic or apyrimidinic (AP) sites, generating a 3'-hydroxyl group and a 5'-terminal sugar phosphate. This chain is Probable endonuclease 4, found in Buchnera aphidicola subsp. Baizongia pistaciae (strain Bp).